A 368-amino-acid polypeptide reads, in one-letter code: Histidinol-phosphate aminotransferase (368 aa).

Residue Lys223 is modified to N6-(pyridoxal phosphate)lysine.

The protein belongs to the class-II pyridoxal-phosphate-dependent aminotransferase family. Histidinol-phosphate aminotransferase subfamily. Homodimer. Requires pyridoxal 5'-phosphate as cofactor.

It catalyses the reaction L-histidinol phosphate + 2-oxoglutarate = 3-(imidazol-4-yl)-2-oxopropyl phosphate + L-glutamate. Its pathway is amino-acid biosynthesis; L-histidine biosynthesis; L-histidine from 5-phospho-alpha-D-ribose 1-diphosphate: step 7/9. In Rhodospirillum rubrum (strain ATCC 11170 / ATH 1.1.1 / DSM 467 / LMG 4362 / NCIMB 8255 / S1), this protein is Histidinol-phosphate aminotransferase.